Reading from the N-terminus, the 136-residue chain is UPF0275 protein PM0493 (136 aa).

Belongs to the UPF0275 family.

This Pasteurella multocida (strain Pm70) protein is UPF0275 protein PM0493.